A 239-amino-acid polypeptide reads, in one-letter code: Small ribosomal subunit protein uS2c (239 aa).

This sequence belongs to the universal ribosomal protein uS2 family.

The protein localises to the plastid. It localises to the organellar chromatophore. This chain is Small ribosomal subunit protein uS2c (rps2), found in Paulinella chromatophora.